Here is a 663-residue protein sequence, read N- to C-terminus: Transcriptional repressor CTCFL (663 aa).

The span at 24–51 (EKGLKEEEKDGVCREKDHRSPSELEAER) shows a compositional bias: basic and acidic residues. 2 disordered regions span residues 24-55 (EKGL…TSGA) and 221-250 (NSNV…QRKT). 10 consecutive C2H2-type zinc fingers follow at residues 257–279 (FHCD…MKTH), 285–307 (HLCH…VNTH), 313–336 (YKCN…RYKH), 342–364 (FKCS…VRSH), 370–392 (FQCC…MRTH), 398–421 (YECH…LQKH), 428–451 (YQCP…RNLH), 458–480 (LKCR…QKTH), 486–508 (FKCK…IRTH), and 514–537 (FTCL…RKYH). The C2H2-type 11; atypical zinc-finger motif lies at 546 to 568 (YKCSKCGKGFSRWINLHRHSEKC). Residues 569 to 630 (GSGEAKSAAS…STTKGEQFPG (62 aa)) form a disordered region. Residues 580–590 (KGRRTRKRKQT) are compositionally biased toward basic residues. Residues 594-607 (EATKGQKEAAKGWK) show a composition bias toward basic and acidic residues. Residues 608–620 (EAANGDEAAAEEA) show a composition bias toward low complexity.

It belongs to the CTCF zinc-finger protein family. Interacts with histones, PRMT7 and SETD1A. Interacts (via N-terminus) with BAG6/BAT3. In terms of tissue distribution, testis specific. Specifically expressed in primary spermatocytes.

The protein localises to the cytoplasm. Its subcellular location is the nucleus. Its function is as follows. Testis-specific DNA binding protein responsible for insulator function, nuclear architecture and transcriptional control, which probably acts by recruiting epigenetic chromatin modifiers. Plays a key role in gene imprinting in male germline, by participating in the establishment of differential methylation at the IGF2/H19 imprinted control region (ICR). Directly binds the unmethylated H19 ICR and recruits the PRMT7 methyltransferase, leading to methylate histone H4 'Arg-3' to form H4R3sme2. This probably leads to recruit de novo DNA methyltransferases at these sites. Seems to act as tumor suppressor. In association with DNMT1 and DNMT3B, involved in activation of BAG1 gene expression by binding to its promoter. Required for dimethylation of H3 lysine 4 (H3K4me2) of MYC and BRCA1 promoters. This Homo sapiens (Human) protein is Transcriptional repressor CTCFL (CTCFL).